The following is a 137-amino-acid chain: Hemoglobin subunit alpha-2 (137 aa).

A Globin domain is found at 1-137 (DDRSHILAIW…VGGSLTSKYR (137 aa)). H54 provides a ligand contact to O2. H83 contributes to the heme b binding site.

The protein belongs to the globin family. The N-terminus of the mature protein is acetylated. Red blood cells.

This chain is Hemoglobin subunit alpha-2, found in Telmatobius peruvianus (Andean frog).